The chain runs to 184 residues: GTP cyclohydrolase 1 (184 aa).

C75, H78, and C146 together coordinate Zn(2+).

It belongs to the GTP cyclohydrolase I family. As to quaternary structure, homomer.

The enzyme catalyses GTP + H2O = 7,8-dihydroneopterin 3'-triphosphate + formate + H(+). The protein operates within cofactor biosynthesis; 7,8-dihydroneopterin triphosphate biosynthesis; 7,8-dihydroneopterin triphosphate from GTP: step 1/1. The chain is GTP cyclohydrolase 1 from Streptococcus pneumoniae (strain ATCC 700669 / Spain 23F-1).